Here is a 395-residue protein sequence, read N- to C-terminus: Chaperone protein DnaJ 2 (395 aa).

The 66-residue stretch at 10 to 75 (DYYADLGVSK…TKRREYDDLK (66 aa)) folds into the J domain. The segment at 165–242 (GTTIPVELTG…CRGRGTVRRT (78 aa)) adopts a CR-type zinc-finger fold. Residues Cys178, Cys181, Cys194, Cys197, Cys216, Cys219, Cys230, and Cys233 each contribute to the Zn(2+) site. CXXCXGXG motif repeat units follow at residues 178–185 (CNTCHGSG), 194–201 (CGQCNGSG), 216–223 (CTNCGGTG), and 230–237 (CVDCRGRG).

It belongs to the DnaJ family. Homodimer. Zn(2+) serves as cofactor.

It is found in the cytoplasm. Participates actively in the response to hyperosmotic and heat shock by preventing the aggregation of stress-denatured proteins and by disaggregating proteins, also in an autonomous, DnaK-independent fashion. Unfolded proteins bind initially to DnaJ; upon interaction with the DnaJ-bound protein, DnaK hydrolyzes its bound ATP, resulting in the formation of a stable complex. GrpE releases ADP from DnaK; ATP binding to DnaK triggers the release of the substrate protein, thus completing the reaction cycle. Several rounds of ATP-dependent interactions between DnaJ, DnaK and GrpE are required for fully efficient folding. Also involved, together with DnaK and GrpE, in the DNA replication of plasmids through activation of initiation proteins. The sequence is that of Chaperone protein DnaJ 2 from Corynebacterium efficiens (strain DSM 44549 / YS-314 / AJ 12310 / JCM 11189 / NBRC 100395).